The chain runs to 91 residues: Non-specific lipid-transfer protein 1 (91 aa).

4 disulfide bridges follow: Cys3/Cys50, Cys13/Cys27, Cys28/Cys73, and Cys48/Cys87.

This sequence belongs to the plant LTP family.

Plant non-specific lipid-transfer proteins transfer phospholipids as well as galactolipids across membranes. May play a role in wax or cutin deposition in the cell walls of expanding epidermal cells and certain secretory tissues. The polypeptide is Non-specific lipid-transfer protein 1 (Morus nigra (Black mulberry)).